Consider the following 375-residue polypeptide: Probable pectin lyase C (375 aa).

An N-terminal signal peptide occupies residues 1-20; sequence MKITSTIPAVLLGLAPLSAA. 2 cysteine pairs are disulfide-bonded: Cys-83–Cys-100 and Cys-92–Cys-220. Arg-250 is a catalytic residue. The cysteines at positions 317 and 325 are disulfide-linked.

This sequence belongs to the polysaccharide lyase 1 family.

The protein resides in the secreted. The enzyme catalyses Eliminative cleavage of (1-&gt;4)-alpha-D-galacturonan methyl ester to give oligosaccharides with 4-deoxy-6-O-methyl-alpha-D-galact-4-enuronosyl groups at their non-reducing ends.. Functionally, pectinolytic enzymes consist of four classes of enzymes: pectin lyase, polygalacturonase, pectin methylesterase and rhamnogalacturonase. Among pectinolytic enzymes, pectin lyase is the most important in depolymerization of pectin, since it cleaves internal glycosidic bonds of highly methylated pectins. The sequence is that of Probable pectin lyase C (pelC) from Aspergillus oryzae (strain ATCC 42149 / RIB 40) (Yellow koji mold).